Consider the following 20-residue polypeptide: Ribosome-inactivating protein (20 aa).

The interval 1–20 is disordered; sequence NVRFDLSGATSSSYKTFIKN. Residues 8-20 show a composition bias toward polar residues; sequence GATSSSYKTFIKN.

Belongs to the ribosome-inactivating protein family. Type 1 RIP subfamily.

It carries out the reaction Endohydrolysis of the N-glycosidic bond at one specific adenosine on the 28S rRNA.. In Cucurbita pepo (Vegetable marrow), this protein is Ribosome-inactivating protein.